The sequence spans 144 residues: Maximins 5/H4 type 3 (144 aa).

Residues 1-18 form the signal peptide; it reads MNFKYIVAVSFLIASAYA. 2 propeptides span residues 19-43 and 74-123; these read RSVQNDEQSLSQRDVLEEESLREIR and TAED…KEKR. Leu143 is subject to Leucine amide.

It belongs to the bombinin family. In terms of tissue distribution, expressed by the skin glands.

It is found in the secreted. Functionally, maximin-5 shows antibacterial activity against both Gram-positive and Gram-negative bacteria. The only exception is the resistance of E.coli. Also shows antimicrobial activity against fungi C.albicans, A.flavus and P.uticale. It has little hemolytic activity. It does not possess a significant cytotoxicity against tumor cell lines. It does not possess a significant anti-HIV activity. In terms of biological role, maximin-H4 shows antibacterial activity against both Gram-positive and Gram-negative bacteria. It also shows antimicrobial activity against the fungus C.albicans. Shows strong hemolytic activity. The chain is Maximins 5/H4 type 3 from Bombina maxima (Giant fire-bellied toad).